We begin with the raw amino-acid sequence, 351 residues long: SKP1-like protein 21 (351 aa).

The interaction with the F-box domain of F-box proteins stretch occupies residues 108 to 167; that stretch reads TSAADSLQLKPLVDLTSRALARIIEGKTPEEIREIFHLPDDLTEEEKLEPLKNTMDDPRI. Disordered regions lie at residues 216–240 and 330–351; these read VKTSKSKKKNKKRKEQKNGSSNGTC and VNFSINGNGTSRRLTGPAAGHK. A compositionally biased stretch (basic residues) spans 217-230; it reads KTSKSKKKNKKRKE. Positions 330-342 are enriched in polar residues; that stretch reads VNFSINGNGTSRR.

It belongs to the SKP1 family. As to quaternary structure, part of a SCF (SKP1-cullin-F-box) protein ligase complex. As to expression, expressed in young seedlings, roots, leaves, floral stems, inflorescences, and siliques.

The protein localises to the nucleus. It participates in protein modification; protein ubiquitination. Functionally, involved in ubiquitination and subsequent proteasomal degradation of target proteins. Together with CUL1, RBX1 and a F-box protein, it forms a SCF E3 ubiquitin ligase complex. The functional specificity of this complex depends on the type of F-box protein. In the SCF complex, it serves as an adapter that links the F-box protein to CUL1. The sequence is that of SKP1-like protein 21 (ASK21) from Arabidopsis thaliana (Mouse-ear cress).